The following is a 352-amino-acid chain: MAQPQRPLQVPDITKSTHSGGNTVLAYASSAMQGYRSTMEDAHATIENLDALTNTSFFGVYDGHGGSAVARYCANHLHNKVLEQEDFSSNLANALRQSFFRMDEMLRNQAASKELTEYGSGNEYWRTAGRSWLRCAPCVLGPVYCGPLAEGCTACVVLIRNTQIVVGNAGDARCVISRNGQAIALSNDHKPNFPEETQRIVAAGGSVSFSRGSHRVNNGIAVSRAIGDLSYKNNKKLRPEQQLLTCSPEIRADQLTDDTEFLVIACDGVWDVLANQAVVDFVRLHLNNGVELSVICESLLQEAITRDPPSTDNMSVILVRFLHPEGNRGARAATSSTSTGTVPSRHSKSISL.

Residues Ala26–Phe321 form the PPM-type phosphatase domain. Positions 62, 63, 267, and 312 each coordinate Mn(2+). The tract at residues Arg328–Leu352 is disordered. The segment covering Gly329–Thr341 has biased composition (low complexity).

It belongs to the PP2C family. Requires Mg(2+) as cofactor. Mn(2+) is required as a cofactor.

The catalysed reaction is O-phospho-L-seryl-[protein] + H2O = L-seryl-[protein] + phosphate. It carries out the reaction O-phospho-L-threonyl-[protein] + H2O = L-threonyl-[protein] + phosphate. This is Probable protein phosphatase 2C 42 from Oryza sativa subsp. japonica (Rice).